A 249-amino-acid polypeptide reads, in one-letter code: Coproheme decarboxylase (249 aa).

Fe-coproporphyrin III-binding positions include R131, Y145–K149, H172, and Q185. Residue Y145 is part of the active site.

Belongs to the ChdC family. Type 1 subfamily. The cofactor is Fe-coproporphyrin III.

The enzyme catalyses Fe-coproporphyrin III + 2 H2O2 + 2 H(+) = heme b + 2 CO2 + 4 H2O. The catalysed reaction is Fe-coproporphyrin III + H2O2 + H(+) = harderoheme III + CO2 + 2 H2O. It carries out the reaction harderoheme III + H2O2 + H(+) = heme b + CO2 + 2 H2O. Its pathway is porphyrin-containing compound metabolism; protoheme biosynthesis. Its function is as follows. Involved in coproporphyrin-dependent heme b biosynthesis. Catalyzes the decarboxylation of Fe-coproporphyrin III (coproheme) to heme b (protoheme IX), the last step of the pathway. The reaction occurs in a stepwise manner with a three-propionate intermediate. This Staphylococcus haemolyticus (strain JCSC1435) protein is Coproheme decarboxylase.